Consider the following 376-residue polypeptide: Protein MGF 360-7L (376 aa).

It belongs to the asfivirus MGF 360 family.

Its function is as follows. Plays a role in virus cell tropism, and may be required for efficient virus replication in macrophages. This is Protein MGF 360-7L from Ornithodoros (relapsing fever ticks).